Consider the following 336-residue polypeptide: Acetaldehyde dehydrogenase 1 (336 aa).

32 to 35 lines the NAD(+) pocket; it reads SGVV. The active-site Acyl-thioester intermediate is cysteine 150. An NAD(+)-binding site is contributed by asparagine 309.

The protein belongs to the acetaldehyde dehydrogenase family.

It catalyses the reaction acetaldehyde + NAD(+) + CoA = acetyl-CoA + NADH + H(+). In Mycobacterium ulcerans (strain Agy99), this protein is Acetaldehyde dehydrogenase 1 (mhpF).